We begin with the raw amino-acid sequence, 373 residues long: Pollen allergen KBG 31 (373 aa).

A signal peptide spans 1–28 (MDKANGAYKTALKAASAVAPAEKFPVFQ).

The protein belongs to the Poa p IX/Phl p VI allergen family. As to expression, pollen.

In Poa pratensis (Kentucky bluegrass), this protein is Pollen allergen KBG 31.